Reading from the N-terminus, the 1593-residue chain is Laminin subunit gamma-1 (1593 aa).

Residues 1 to 19 (MSLFSCLLLWTLWAACSHG) form the signal peptide. Positions 30-269 (RPQRCMPEFV…AISDFAVGGR (240 aa)) constitute a Laminin N-terminal domain. Asn-44 and Asn-118 each carry an N-linked (GlcNAc...) asparagine glycan. Intrachain disulfides connect Cys-270/Cys-279, Cys-272/Cys-289, Cys-291/Cys-300, Cys-303/Cys-323, Cys-326/Cys-335, Cys-328/Cys-351, Cys-354/Cys-363, Cys-366/Cys-379, Cys-382/Cys-394, Cys-384/Cys-400, Cys-402/Cys-411, Cys-414/Cys-426, Cys-429/Cys-440, Cys-431/Cys-447, Cys-449/Cys-458, and Cys-461/Cys-476. 4 Laminin EGF-like domains span residues 270 to 325 (CKCN…ECLP), 326 to 381 (CNCN…RCLS), 382 to 428 (CGCN…GCRP), and 429 to 478 (CSCN…GCTP). A Laminin IV type A domain is found at 505 to 673 (RDDEGWKGKQ…PGTPARWVEK (169 aa)). N-linked (GlcNAc...) asparagine glycans are attached at residues Asn-560, Asn-634, and Asn-654. Intrachain disulfides connect Cys-708–Cys-717, Cys-710–Cys-724, Cys-726–Cys-735, Cys-738–Cys-754, Cys-757–Cys-765, Cys-759–Cys-776, Cys-779–Cys-788, Cys-791–Cys-809, Cys-812–Cys-826, Cys-814–Cys-833, Cys-836–Cys-845, Cys-848–Cys-865, Cys-868–Cys-882, Cys-870–Cys-889, Cys-891–Cys-900, Cys-903–Cys-916, Cys-919–Cys-931, Cys-921–Cys-938, Cys-940–Cys-949, Cys-952–Cys-964, Cys-967–Cys-979, Cys-969–Cys-985, Cys-987–Cys-996, and Cys-999–Cys-1012. 6 Laminin EGF-like domains span residues 708 to 756 (CNCN…DCKA), 757 to 811 (CPCP…ACRA), 812 to 867 (CSCN…KCKP), 868 to 918 (CKCS…GCER), 919 to 966 (CNCN…GCKP), and 967 to 1014 (CDCD…GCQQ). N-linked (GlcNAc...) asparagine glycosylation is found at Asn-1006, Asn-1091, Asn-1159, Asn-1189, Asn-1207, Asn-1254, Asn-1364, and Asn-1379. The interval 1014–1593 (QCPNCYSLVR…CFNTPSLERP (580 aa)) is domain II and I. Residues 1021–1580 (LVRDKVNQQR…ANLNDIKNTL (560 aa)) are a coiled coil.

Laminin is a complex glycoprotein, consisting of three different polypeptide chains (alpha, beta, gamma), which are bound to each other by disulfide bonds into a cross-shaped molecule comprising one long and three short arms with globules at each end.

The protein resides in the secreted. It localises to the extracellular space. Its subcellular location is the extracellular matrix. It is found in the basement membrane. In terms of biological role, binding to cells via a high affinity receptor, laminin is thought to mediate the attachment, migration and organization of cells into tissues during embryonic development by interacting with other extracellular matrix components. The sequence is that of Laminin subunit gamma-1 (lamc1) from Danio rerio (Zebrafish).